The following is a 396-amino-acid chain: 1-deoxy-D-xylulose 5-phosphate reductoisomerase (396 aa).

NADPH contacts are provided by threonine 15, glycine 16, serine 17, isoleucine 18, glycine 41, and asparagine 130. Lysine 131 is a 1-deoxy-D-xylulose 5-phosphate binding site. Residue glutamate 132 coordinates NADPH. Aspartate 155 provides a ligand contact to Mn(2+). Residues serine 156, glutamate 157, serine 181, and histidine 204 each coordinate 1-deoxy-D-xylulose 5-phosphate. A Mn(2+)-binding site is contributed by glutamate 157. Glycine 210 lines the NADPH pocket. Serine 217, asparagine 222, lysine 223, and glutamate 226 together coordinate 1-deoxy-D-xylulose 5-phosphate. Glutamate 226 is a binding site for Mn(2+).

It belongs to the DXR family. Requires Mg(2+) as cofactor. Mn(2+) serves as cofactor.

It carries out the reaction 2-C-methyl-D-erythritol 4-phosphate + NADP(+) = 1-deoxy-D-xylulose 5-phosphate + NADPH + H(+). It functions in the pathway isoprenoid biosynthesis; isopentenyl diphosphate biosynthesis via DXP pathway; isopentenyl diphosphate from 1-deoxy-D-xylulose 5-phosphate: step 1/6. Its function is as follows. Catalyzes the NADPH-dependent rearrangement and reduction of 1-deoxy-D-xylulose-5-phosphate (DXP) to 2-C-methyl-D-erythritol 4-phosphate (MEP). The sequence is that of 1-deoxy-D-xylulose 5-phosphate reductoisomerase from Bifidobacterium longum (strain DJO10A).